A 331-amino-acid chain; its full sequence is Thiamine-monophosphate kinase (331 aa).

Mg(2+) contacts are provided by Asp-43, Thr-59, Thr-60, and Asp-61. His-68 serves as a coordination point for substrate. The Mg(2+) site is built by Asp-90, Asp-138, and Asp-231. An ATP-binding site is contributed by 137–138; that stretch reads GD. Ser-233 provides a ligand contact to ATP. Asp-234 contributes to the Mg(2+) binding site. Substrate-binding residues include Glu-284 and Trp-328.

Belongs to the thiamine-monophosphate kinase family.

It carries out the reaction thiamine phosphate + ATP = thiamine diphosphate + ADP. It functions in the pathway cofactor biosynthesis; thiamine diphosphate biosynthesis; thiamine diphosphate from thiamine phosphate: step 1/1. Functionally, catalyzes the ATP-dependent phosphorylation of thiamine-monophosphate (TMP) to form thiamine-pyrophosphate (TPP), the active form of vitamin B1. This Corynebacterium glutamicum (strain ATCC 13032 / DSM 20300 / JCM 1318 / BCRC 11384 / CCUG 27702 / LMG 3730 / NBRC 12168 / NCIMB 10025 / NRRL B-2784 / 534) protein is Thiamine-monophosphate kinase.